The primary structure comprises 209 residues: Probable chalcone--flavanone isomerase 3 (209 aa).

Belongs to the chalcone isomerase family.

It carries out the reaction a chalcone = a flavanone.. It functions in the pathway secondary metabolite biosynthesis; flavonoid biosynthesis. Involved in anthocyanin biosynthesis. This is Probable chalcone--flavanone isomerase 3 (CHI3) from Arabidopsis thaliana (Mouse-ear cress).